A 182-amino-acid chain; its full sequence is Inner membrane-spanning protein YciB (182 aa).

5 helical membrane passes run 22 to 42 (IYAA…VVWV), 53 to 73 (ITLV…NEAF), 76 to 96 (WKVT…QFLF), 121 to 141 (FSWG…AFYL), and 149 to 169 (FKVF…GIYI).

It belongs to the YciB family.

It localises to the cell inner membrane. In terms of biological role, plays a role in cell envelope biogenesis, maintenance of cell envelope integrity and membrane homeostasis. In Tolumonas auensis (strain DSM 9187 / NBRC 110442 / TA 4), this protein is Inner membrane-spanning protein YciB.